Consider the following 310-residue polypeptide: Glutaminase (310 aa).

Residues serine 66, asparagine 117, glutamate 161, asparagine 168, tyrosine 192, tyrosine 244, and valine 262 each coordinate substrate. Lysine 294 is modified (N6-acetyllysine).

The protein belongs to the glutaminase family. As to quaternary structure, homotetramer.

It carries out the reaction L-glutamine + H2O = L-glutamate + NH4(+). The protein is Glutaminase of Escherichia coli O81 (strain ED1a).